A 434-amino-acid polypeptide reads, in one-letter code: Probable carboxypeptidase BDBG_01803 (434 aa).

Positions 1-20 (MKLSHLAAALSAQLVAPVAA) are cleaved as a signal peptide. Asn35, Asn136, and Asn150 each carry an N-linked (GlcNAc...) asparagine glycan. Asp160 provides a ligand contact to Zn(2+). Glu192 (proton acceptor) is an active-site residue. Glu193 lines the Zn(2+) pocket. N-linked (GlcNAc...) asparagine glycosylation occurs at Asn343.

This sequence belongs to the peptidase M20A family. It depends on Zn(2+) as a cofactor.

It localises to the secreted. The chain is Probable carboxypeptidase BDBG_01803 from Blastomyces gilchristii (strain SLH14081) (Blastomyces dermatitidis).